Reading from the N-terminus, the 260-residue chain is Phosphate import ATP-binding protein PstB 2 (260 aa).

Residues 9-255 enclose the ABC transporter domain; it reads IKVKDLSFYY…PLDSRTRDYV (247 aa). Residue 41-48 coordinates ATP; it reads GPSGCGKS.

This sequence belongs to the ABC transporter superfamily. Phosphate importer (TC 3.A.1.7) family. In terms of assembly, the complex is composed of two ATP-binding proteins (PstB), two transmembrane proteins (PstC and PstA) and a solute-binding protein (PstS).

Its subcellular location is the cell inner membrane. The catalysed reaction is phosphate(out) + ATP + H2O = ADP + 2 phosphate(in) + H(+). Its function is as follows. Part of the ABC transporter complex PstSACB involved in phosphate import. Responsible for energy coupling to the transport system. The polypeptide is Phosphate import ATP-binding protein PstB 2 (Nostoc sp. (strain PCC 7120 / SAG 25.82 / UTEX 2576)).